The following is a 444-amino-acid chain: N-succinylarginine dihydrolase (444 aa).

Residues 19–28, Asn110, and 137–138 each bind substrate; these read AGLSFGNVAS and HR. Glu174 is a catalytic residue. Arg214 provides a ligand contact to substrate. His250 is a catalytic residue. Positions 252 and 362 each coordinate substrate. Residue Cys368 is the Nucleophile of the active site.

It belongs to the succinylarginine dihydrolase family. In terms of assembly, homodimer.

It carries out the reaction N(2)-succinyl-L-arginine + 2 H2O + 2 H(+) = N(2)-succinyl-L-ornithine + 2 NH4(+) + CO2. Its pathway is amino-acid degradation; L-arginine degradation via AST pathway; L-glutamate and succinate from L-arginine: step 2/5. Catalyzes the hydrolysis of N(2)-succinylarginine into N(2)-succinylornithine, ammonia and CO(2). This is N-succinylarginine dihydrolase from Shewanella sp. (strain ANA-3).